The primary structure comprises 427 residues: 3-phosphoshikimate 1-carboxyvinyltransferase (427 aa).

3-phosphoshikimate-binding residues include Lys20, Ser21, and Arg25. Lys20 contacts phosphoenolpyruvate. Gly92 and Arg120 together coordinate phosphoenolpyruvate. The 3-phosphoshikimate site is built by Ser165, Gln167, Asp313, and Lys340. Residue Gln167 participates in phosphoenolpyruvate binding. The active-site Proton acceptor is the Asp313. The phosphoenolpyruvate site is built by Arg344 and Arg388.

This sequence belongs to the EPSP synthase family. As to quaternary structure, monomer.

It is found in the cytoplasm. It catalyses the reaction 3-phosphoshikimate + phosphoenolpyruvate = 5-O-(1-carboxyvinyl)-3-phosphoshikimate + phosphate. The protein operates within metabolic intermediate biosynthesis; chorismate biosynthesis; chorismate from D-erythrose 4-phosphate and phosphoenolpyruvate: step 6/7. Its function is as follows. Catalyzes the transfer of the enolpyruvyl moiety of phosphoenolpyruvate (PEP) to the 5-hydroxyl of shikimate-3-phosphate (S3P) to produce enolpyruvyl shikimate-3-phosphate and inorganic phosphate. In Geobacillus kaustophilus (strain HTA426), this protein is 3-phosphoshikimate 1-carboxyvinyltransferase.